We begin with the raw amino-acid sequence, 393 residues long: S-adenosylmethionine synthase 1 (393 aa).

Glutamate 9 is a binding site for Mg(2+). Histidine 15 contributes to the ATP binding site. K(+) is bound at residue glutamate 43. Glutamate 56 and glutamine 99 together coordinate L-methionine. Cysteine 114 is modified (S-nitrosocysteine). Residues 167 to 169 (DGK), 235 to 238 (SGRF), aspartate 246, 252 to 253 (RK), alanine 269, lysine 273, and lysine 277 each bind ATP. Residue aspartate 246 participates in L-methionine binding. Residue lysine 277 coordinates L-methionine.

The protein belongs to the AdoMet synthase family. As to quaternary structure, homotetramer. Interacts with GRF3. Mn(2+) serves as cofactor. Requires Mg(2+) as cofactor. The cofactor is Co(2+). It depends on K(+) as a cofactor. In terms of processing, S-nitrosylated in the presence of NO. The inhibition of SAM1 activity by S-nitrosylation could contribute to the cross-talk between ethylene and NO signaling. Highly expressed in stems and roots.

Its subcellular location is the cytoplasm. The enzyme catalyses L-methionine + ATP + H2O = S-adenosyl-L-methionine + phosphate + diphosphate. The protein operates within amino-acid biosynthesis; S-adenosyl-L-methionine biosynthesis; S-adenosyl-L-methionine from L-methionine: step 1/1. With respect to regulation, reversibly inhibited by NO. Inhibited by 5,5'-dithiobis-2-nitrobenzoic acid (DTNB) and N-ethylmaleimide (NEM) (in vitro). In terms of biological role, catalyzes the formation of S-adenosylmethionine from methionine and ATP. The reaction comprises two steps that are both catalyzed by the same enzyme: formation of S-adenosylmethionine (AdoMet) and triphosphate, and subsequent hydrolysis of the triphosphate. This chain is S-adenosylmethionine synthase 1 (SAM1), found in Arabidopsis thaliana (Mouse-ear cress).